The sequence spans 719 residues: Ribosomal RNA large subunit methyltransferase K/L (719 aa).

One can recognise a THUMP domain in the interval 43–154; that stretch reads TQYRVLLWTR…REELVISLDL (112 aa).

This sequence belongs to the methyltransferase superfamily. RlmKL family.

It localises to the cytoplasm. It catalyses the reaction guanosine(2445) in 23S rRNA + S-adenosyl-L-methionine = N(2)-methylguanosine(2445) in 23S rRNA + S-adenosyl-L-homocysteine + H(+). The catalysed reaction is guanosine(2069) in 23S rRNA + S-adenosyl-L-methionine = N(2)-methylguanosine(2069) in 23S rRNA + S-adenosyl-L-homocysteine + H(+). Its function is as follows. Specifically methylates the guanine in position 2445 (m2G2445) and the guanine in position 2069 (m7G2069) of 23S rRNA. The polypeptide is Ribosomal RNA large subunit methyltransferase K/L (Pasteurella multocida (strain Pm70)).